The sequence spans 263 residues: Indole-3-glycerol phosphate synthase (263 aa).

This sequence belongs to the TrpC family.

It carries out the reaction 1-(2-carboxyphenylamino)-1-deoxy-D-ribulose 5-phosphate + H(+) = (1S,2R)-1-C-(indol-3-yl)glycerol 3-phosphate + CO2 + H2O. Its pathway is amino-acid biosynthesis; L-tryptophan biosynthesis; L-tryptophan from chorismate: step 4/5. This chain is Indole-3-glycerol phosphate synthase, found in Acidithiobacillus ferrooxidans (strain ATCC 23270 / DSM 14882 / CIP 104768 / NCIMB 8455) (Ferrobacillus ferrooxidans (strain ATCC 23270)).